A 513-amino-acid polypeptide reads, in one-letter code: MQLNSTEIAELIKQRIEQFEVVSEARNEGTIVGVTDGIIRIHGLADVMQGEMIELPGNRYAIALNLERDSVGAVVMGPYADLQEGAKVTSSGRILEVPVGRGLLGRVVNTLGAPIDGKGAIEADGFEPVEKIAPGVIERQSVDQPIQTGYKSVDAMIPVGRGQRELVIGDRQTGKTALAIDAIINQKDSGVKCVYVAVGQKASTIANVVRKLEEHGAMAHTIVVAASASESAALQYLAPYSGCTMGEYFRDRGEDALIVYDDLSKQAVAYRQISLLLRRPPGREAYPGDVFYLHSRLLERAARVNENYVENFTKGEVKGKTGSLTALPIIETQAGDVSAFVPTNVISITDGQIFLETDLFNSGIRPAVNAGISVSRVGGAAQTKIVKKLGGGIRLALAQYRELAAFSQFASDLDEATRAQLEHGERVMELMKQNQYAPLSVADMSVSLFAVEKGYLKDVELDKILDFEAALHSYMNSEYAELIKTINDTGNFNGEIEATLAEALEKFKATQTW.

An ATP-binding site is contributed by 169–176 (GDRQTGKT).

It belongs to the ATPase alpha/beta chains family. As to quaternary structure, F-type ATPases have 2 components, CF(1) - the catalytic core - and CF(0) - the membrane proton channel. CF(1) has five subunits: alpha(3), beta(3), gamma(1), delta(1), epsilon(1). CF(0) has three main subunits: a(1), b(2) and c(9-12). The alpha and beta chains form an alternating ring which encloses part of the gamma chain. CF(1) is attached to CF(0) by a central stalk formed by the gamma and epsilon chains, while a peripheral stalk is formed by the delta and b chains.

It is found in the cell inner membrane. The catalysed reaction is ATP + H2O + 4 H(+)(in) = ADP + phosphate + 5 H(+)(out). Functionally, produces ATP from ADP in the presence of a proton gradient across the membrane. The alpha chain is a regulatory subunit. This chain is ATP synthase subunit alpha 2, found in Pseudoalteromonas atlantica (strain T6c / ATCC BAA-1087).